The primary structure comprises 116 residues: UPF0482 protein PC1_2049 (116 aa).

The N-terminal stretch at 1–31 (MNHYSFSSLIRAFIPLSLVIVSAAWQPAALA) is a signal peptide.

The protein belongs to the UPF0482 family.

The polypeptide is UPF0482 protein PC1_2049 (Pectobacterium carotovorum subsp. carotovorum (strain PC1)).